The sequence spans 139 residues: FAD synthase (139 aa).

ATP contacts are provided by residues 9–10, 14–17, and N92; these read TF and HPGH.

Belongs to the archaeal FAD synthase family. Homodimer. A divalent metal cation serves as cofactor.

The enzyme catalyses FMN + ATP + H(+) = FAD + diphosphate. The protein operates within cofactor biosynthesis; FAD biosynthesis; FAD from FMN: step 1/1. Catalyzes the transfer of the AMP portion of ATP to flavin mononucleotide (FMN) to produce flavin adenine dinucleotide (FAD) coenzyme. The polypeptide is FAD synthase (Methanocella paludicola (strain DSM 17711 / JCM 13418 / NBRC 101707 / SANAE)).